Consider the following 275-residue polypeptide: NAD kinase (275 aa).

The active-site Proton acceptor is the aspartate 66. Residues 66–67 (DG), 138–139 (NE), histidine 168, aspartate 170, 181–186 (TAYNLS), and valine 205 contribute to the NAD(+) site.

It belongs to the NAD kinase family. Requires a divalent metal cation as cofactor.

The protein resides in the cytoplasm. The enzyme catalyses NAD(+) + ATP = ADP + NADP(+) + H(+). Functionally, involved in the regulation of the intracellular balance of NAD and NADP, and is a key enzyme in the biosynthesis of NADP. Catalyzes specifically the phosphorylation on 2'-hydroxyl of the adenosine moiety of NAD to yield NADP. The sequence is that of NAD kinase from Halorubrum lacusprofundi (strain ATCC 49239 / DSM 5036 / JCM 8891 / ACAM 34).